We begin with the raw amino-acid sequence, 316 residues long: Ribosomal RNA small subunit methyltransferase H (316 aa).

S-adenosyl-L-methionine contacts are provided by residues 35–37 (AGH), Asp55, Phe84, Asp105, and Gln112.

Belongs to the methyltransferase superfamily. RsmH family.

The protein resides in the cytoplasm. It carries out the reaction cytidine(1402) in 16S rRNA + S-adenosyl-L-methionine = N(4)-methylcytidine(1402) in 16S rRNA + S-adenosyl-L-homocysteine + H(+). In terms of biological role, specifically methylates the N4 position of cytidine in position 1402 (C1402) of 16S rRNA. This Streptococcus suis (strain 05ZYH33) protein is Ribosomal RNA small subunit methyltransferase H.